The following is a 238-amino-acid chain: Probable septum site-determining protein MinC (238 aa).

It belongs to the MinC family. As to quaternary structure, interacts with MinD and FtsZ.

Functionally, cell division inhibitor that blocks the formation of polar Z ring septums. Rapidly oscillates between the poles of the cell to destabilize FtsZ filaments that have formed before they mature into polar Z rings. Prevents FtsZ polymerization. This is Probable septum site-determining protein MinC from Xylella fastidiosa (strain M12).